The primary structure comprises 210 residues: Uracil phosphoribosyltransferase (210 aa).

Residues R77, R102, and 129–137 (DPMLATGAS) each bind 5-phospho-alpha-D-ribose 1-diphosphate. Residues I195 and 200–202 (GDA) each bind uracil. D201 provides a ligand contact to 5-phospho-alpha-D-ribose 1-diphosphate.

The protein belongs to the UPRTase family. Mg(2+) serves as cofactor.

The catalysed reaction is UMP + diphosphate = 5-phospho-alpha-D-ribose 1-diphosphate + uracil. It participates in pyrimidine metabolism; UMP biosynthesis via salvage pathway; UMP from uracil: step 1/1. With respect to regulation, allosterically activated by GTP. Functionally, catalyzes the conversion of uracil and 5-phospho-alpha-D-ribose 1-diphosphate (PRPP) to UMP and diphosphate. The protein is Uracil phosphoribosyltransferase of Mycoplasmoides gallisepticum (strain R(low / passage 15 / clone 2)) (Mycoplasma gallisepticum).